The following is a 631-amino-acid chain: Probable G-protein coupled receptor 153 (631 aa).

The Extracellular portion of the chain corresponds to 1–11 (MSDERRLPSSA). A helical transmembrane segment spans residues 12 to 32 (VGWLACGGLSLLANAWGILSV). Over 33 to 41 (GAKQKKWKP) the chain is Cytoplasmic. A helical membrane pass occupies residues 42–62 (LEFLLCTLAATHMLNVAVPIA). Residues 63-84 (TYAVVQLRRQRPDYEWNEGLCK) lie on the Extracellular side of the membrane. The helical transmembrane segment at 85–105 (VFVSTFYTLTLATCFSVTSIS) threads the bilayer. The Cytoplasmic segment spans residues 106-126 (YHRMWMVRWPVNYRLSNAKKQ). A helical transmembrane segment spans residues 127–147 (AVHTVMGIWMVSFILSALPAV). Residues 148-162 (GWHDTSERFYTHGCR) are Extracellular-facing. The chain crosses the membrane as a helical span at residues 163–183 (FIVAEIGLGFGVCFLLLVGGS). At 184–243 (VAMGMVCTAIALFQTLATQVGHRADRRTFTVPTIVVEDAQGKRRSSIDGSEPARTSLQIT) the chain is on the cytoplasmic side. A helical transmembrane segment spans residues 244 to 264 (GLVATIVVIYDCLMGFPVLVV). Residues 265-276 (SFSSLRADASAP) are Extracellular-facing. The helical transmembrane segment at 277–297 (WMALCVLWCSVTQALLLPLFL) threads the bilayer. Over 298-631 (WTCDRYRADL…LHSDSLGSAS (334 aa)) the chain is Cytoplasmic. 3 disordered regions span residues 486 to 518 (LQPS…RSAS), 546 to 590 (QPFP…SLSA), and 603 to 631 (CGSI…GSAS). The span at 605–617 (SISSFLSSPSESS) shows a compositional bias: low complexity.

This sequence belongs to the G-protein coupled receptor 1 family.

The protein localises to the cell membrane. Orphan receptor. The sequence is that of Probable G-protein coupled receptor 153 (Gpr153) from Mus musculus (Mouse).